The primary structure comprises 263 residues: Elongin-A (263 aa).

Disordered regions lie at residues 112-147 and 170-263; these read KLEQSKQNKRIVPLEREPRAARPPKRPRPMSNYCPK and SATS…PKRI. 2 stretches are compositionally biased toward polar residues: residues 186-206 and 214-229; these read RSSSNATNTSTKRPLTSNTYP and SFTSQNFKSFNAVKTQ. Residues 230 to 245 show a composition bias toward low complexity; sequence PSSSSSPSISRPTSFP. The span at 253–263 shows a compositional bias: polar residues; the sequence is SRFSSQVPKRI.

It belongs to the ELA1 family. Heterodimer with elc1. Component of a CRL3 E3 ubiquitin ligase complex consisting of a cullin, the linker protein elc1, the substrate receptor pof4/ela1, and the RING protein rbx1. Interacts with skp1.

As part of the CRL3 E3 ubiquitin ligase complex; polyubiquitylates monoubiquitylated RNA polymerase II subunit rpb1 to trigger its proteolysis; plays a role in global genomic repair. In Schizosaccharomyces pombe (strain 972 / ATCC 24843) (Fission yeast), this protein is Elongin-A (pof4).